Consider the following 148-residue polypeptide: Receptor activity-modifying protein 1 (148 aa).

The signal sequence occupies residues 1 to 26; the sequence is MARALCRLPRRGLWLLLAHHLFMTTA. Disulfide bonds link C27/C82, C40/C72, and C57/C104. Residues 27–118 lie on the Extracellular side of the membrane; sequence CQEANYGALL…RAVRDPPGSI (92 aa). A helical transmembrane segment spans residues 119–140; the sequence is LYPFIVVPITVTLLVTALVVWQ. Over 141–148 the chain is Cytoplasmic; sequence SKRTEGIV.

Belongs to the RAMP family. In terms of assembly, heterodimer of CALCRL and RAMP1; the interaction induces allosteric modulation of CALCRL function and CGRP1/CALCA and CGRP2/CALCB ligand specificity. Heterodimer of CALCR and RAMP1; interaction forms the AMYR1 receptor complex for amylin/IAPP and CGRP1/CALCA ligands. As to expression, expressed in many tissues including the uterus, bladder, brain, pancreas and gastro-intestinal tract.

It localises to the cell membrane. In terms of biological role, accessory protein that interacts with and modulates the function of G-protein coupled receptors including calcitonin gene-related peptide type 1 receptor (CALCRL) and calcitonin receptor (CALCR). Required for the transport of CALCRL to the plasma membrane. Together with CALCRL, form the receptor complex for the calcitonin gene-related peptides CGRP1/CALCA and CGRP2/CALCB. Together with CALCR, form the AMYR1 receptor complex for amylin/IAPP and CGRP1/CALCA. This Homo sapiens (Human) protein is Receptor activity-modifying protein 1.